Consider the following 94-residue polypeptide: Pyrimidine/purine nucleoside phosphorylase (94 aa).

This sequence belongs to the nucleoside phosphorylase PpnP family.

It catalyses the reaction a purine D-ribonucleoside + phosphate = a purine nucleobase + alpha-D-ribose 1-phosphate. The enzyme catalyses adenosine + phosphate = alpha-D-ribose 1-phosphate + adenine. It carries out the reaction cytidine + phosphate = cytosine + alpha-D-ribose 1-phosphate. The catalysed reaction is guanosine + phosphate = alpha-D-ribose 1-phosphate + guanine. It catalyses the reaction inosine + phosphate = alpha-D-ribose 1-phosphate + hypoxanthine. The enzyme catalyses thymidine + phosphate = 2-deoxy-alpha-D-ribose 1-phosphate + thymine. It carries out the reaction uridine + phosphate = alpha-D-ribose 1-phosphate + uracil. The catalysed reaction is xanthosine + phosphate = alpha-D-ribose 1-phosphate + xanthine. Functionally, catalyzes the phosphorolysis of diverse nucleosides, yielding D-ribose 1-phosphate and the respective free bases. Can use uridine, adenosine, guanosine, cytidine, thymidine, inosine and xanthosine as substrates. Also catalyzes the reverse reactions. This is Pyrimidine/purine nucleoside phosphorylase from Pseudomonas putida (strain GB-1).